Consider the following 134-residue polypeptide: Large ribosomal subunit protein eL32 (134 aa).

Belongs to the eukaryotic ribosomal protein eL32 family.

In Drosophila affinis (Fruit fly), this protein is Large ribosomal subunit protein eL32 (RpL32).